Reading from the N-terminus, the 257-residue chain is Phycoerythrobilin:ferredoxin oxidoreductase (257 aa).

The protein belongs to the HY2 family.

The catalysed reaction is (3Z)-phycoerythrobilin + oxidized 2[4Fe-4S]-[ferredoxin] = 15,16-dihydrobiliverdin + reduced 2[4Fe-4S]-[ferredoxin] + 2 H(+). Catalyzes the two-electron reduction of the C2 and C3(1) diene system of 15,16-dihydrobiliverdin. In Synechococcus sp. (strain CC9902), this protein is Phycoerythrobilin:ferredoxin oxidoreductase.